Consider the following 538-residue polypeptide: tRNA-2-methylthio-N(6)-dimethylallyladenosine synthase (538 aa).

Residues 1–23 (MNEEQRLGRNGNTDAVSTKEAGS) are disordered. The MTTase N-terminal domain maps to 95–213 (KKFLVRTYGC…LPHLLRNALF (119 aa)). Cysteine 104, cysteine 140, cysteine 174, cysteine 250, cysteine 254, and cysteine 257 together coordinate [4Fe-4S] cluster. Positions 236–466 (REGKTQAWVN…NALVNDISAQ (231 aa)) constitute a Radical SAM core domain. Residues 469–532 (LEYQDKVVEV…TWSLNGEMVE (64 aa)) enclose the TRAM domain.

This sequence belongs to the methylthiotransferase family. MiaB subfamily. Monomer. [4Fe-4S] cluster serves as cofactor.

It is found in the cytoplasm. The enzyme catalyses N(6)-dimethylallyladenosine(37) in tRNA + (sulfur carrier)-SH + AH2 + 2 S-adenosyl-L-methionine = 2-methylsulfanyl-N(6)-dimethylallyladenosine(37) in tRNA + (sulfur carrier)-H + 5'-deoxyadenosine + L-methionine + A + S-adenosyl-L-homocysteine + 2 H(+). Catalyzes the methylthiolation of N6-(dimethylallyl)adenosine (i(6)A), leading to the formation of 2-methylthio-N6-(dimethylallyl)adenosine (ms(2)i(6)A) at position 37 in tRNAs that read codons beginning with uridine. The polypeptide is tRNA-2-methylthio-N(6)-dimethylallyladenosine synthase (Halalkalibacterium halodurans (strain ATCC BAA-125 / DSM 18197 / FERM 7344 / JCM 9153 / C-125) (Bacillus halodurans)).